Here is a 594-residue protein sequence, read N- to C-terminus: Protein CBFA2T2 (594 aa).

Ser24 bears the Phosphoserine mark. Lys29 participates in a covalent cross-link: Glycyl lysine isopeptide (Lys-Gly) (interchain with G-Cter in SUMO2). A disordered region spans residues 48–96 (GGPRPVSFTPTALSNGINHSPPTLNGAPSPPQRFSNGPASSTSSALTNQ). Composition is skewed to polar residues over residues 55–70 (FTPT…SPPT) and 79–96 (QRFS…LTNQ). The segment at 98-206 (LPATCGARQL…QHEHLLLNTS (109 aa)) is interaction with PRDM14. The TAFH domain occupies 104–199 (ARQLSKLKRF…TPSQYLAQHE (96 aa)). The segment at 220 to 257 (VHGNGKRPSPERRDENNFERDTVPPEPPAKRVCTISPA) is disordered. A compositionally biased stretch (basic and acidic residues) spans 227 to 242 (PSPERRDENNFERDTV). A Phosphoserine modification is found at Ser255. The nervy homology region 2 (NHR2) stretch occupies residues 322–368 (QDELVDHRLTEREWADEWKHLDHALNCIMEMVEKTRRSMAVLRRCQE). The segment at 388 to 416 (RKTGTELVSRQHSPGSTDSLSNDSQREFT) is disordered. Residues 393–410 (ELVSRQHSPGSTDSLSND) are compositionally biased toward polar residues. Ser400 carries the post-translational modification Phosphoserine. Residues 426–475 (VEFWKKTEEAVNKVKIQAMSEVQKAVAEAEQKAFEVIATERARMEQTIAD) form a nervy homology region 3 (NHR3) region. Lys440 is covalently cross-linked (Glycyl lysine isopeptide (Lys-Gly) (interchain with G-Cter in SUMO2)). Residues 442–482 (QAMSEVQKAVAEAEQKAFEVIATERARMEQTIADVKRQAAE) adopt a coiled-coil conformation. Zn(2+) contacts are provided by Cys498, Cys501, Cys509, Cys512, Cys518, Cys522, His530, and Cys534. The MYND-type zinc-finger motif lies at 498–534 (CWNCGRKASETCSGCNIARYCGSFCQHKDWERHHRLC). Residues 538 to 594 (LHGHSPHSQSRPLLPGGRGSARSADCSVPSPALDKTSATTSRSSTPASVTAIDANGL) are disordered. Phosphoserine is present on Ser567. The segment covering 573-588 (TSATTSRSSTPASVTA) has biased composition (low complexity).

This sequence belongs to the CBFA2T family. In terms of assembly, homooligomer. Homotetramerization is mediated by the NHR2 domain. Interacts with CBFA2T3/MTG16. Can interact with RUNX1T1/CBFA2T1. Heterotetramerization between members of the CBFA2T family is proposed. Interacts with RBP, GFI1, TCF4, PRDM14. Interacts with TAL1 and CBFA2T3/MTG16; the heteromer with CBFA2T3/MTG16 may function in repression of TAL1. In terms of tissue distribution, expressed in embryonic stem cells.

The protein resides in the nucleus. Functionally, transcriptional corepressor which facilitates transcriptional repression via its association with DNA-binding transcription factors and recruitment of other corepressors and histone-modifying enzymes. Via association with PRDM14 is involved in regulation of embryonic stem cell (ESC) pluripotency. Involved in primordial germ cell (PCG) formation. Stabilizes PRDM14 and OCT4 on chromatin in a homooligomerization-dependent mannerCan repress the expression of MMP7 in a ZBTB33-dependent manner. Through heteromerization with CBFA2T3/MTG16 may be involved in regulation of the proliferation and the differentiation of erythroid progenitors by repressing the expression of TAL1 target genes. Required for the maintenance of the secretory cell lineage in the small intestine. Can inhibit Notch signaling probably by association with RBPJ and may be involved in GFI1-mediated Paneth cell differentiation. The sequence is that of Protein CBFA2T2 (Cbfa2t2) from Mus musculus (Mouse).